The following is a 246-amino-acid chain: Large ribosomal subunit protein uL3 (246 aa).

The segment at 140 to 162 (SHRSIGSTGGRQDPGKTFKNKKM) is disordered. Q151 is modified (N5-methylglutamine).

This sequence belongs to the universal ribosomal protein uL3 family. Part of the 50S ribosomal subunit. Forms a cluster with proteins L14 and L19. In terms of processing, methylated by PrmB.

One of the primary rRNA binding proteins, it binds directly near the 3'-end of the 23S rRNA, where it nucleates assembly of the 50S subunit. The protein is Large ribosomal subunit protein uL3 of Methylobacterium sp. (strain 4-46).